A 703-amino-acid polypeptide reads, in one-letter code: Glycogen [starch] synthase, liver (703 aa).

Residue S8 is modified to Phosphoserine; by PKA. S11 carries the phosphoserine modification. K40 contacts UDP. Residues H205 and R211 each coordinate UDP-alpha-D-glucose. 5 residues coordinate alpha-D-glucose 6-phosphate: H291, E292, Q294, H297, and K301. Residue R331 coordinates UDP. R331 serves as a coordination point for UDP-alpha-D-glucose. Alpha-D-glucose 6-phosphate is bound at residue H501. UDP-alpha-D-glucose is bound by residues E510, W512, and G513. T515 contacts UDP. Alpha-D-glucose 6-phosphate is bound by residues R582 and R586. S627 bears the Phosphoserine mark. Positions 628-703 (PPTTEGFKYP…KKKLHGEYKN (76 aa)) are disordered. Phosphoserine; by GSK3-alpha and GSK3-beta is present on residues S641, S645, S649, and S653. Over residues 647–657 (SGSQASSPQSS) the composition is skewed to low complexity. S657 is subject to Phosphoserine; by CK2. Residues 658–674 (DVEDEVEDERYDEEEEA) show a composition bias toward acidic residues. S683 carries the phosphoserine modification.

Belongs to the glycosyltransferase 3 family. Part of the glycogen synthase (GS)-glycogenin complex, a heterooctamer composed of a tetramer of GS and 2 dimers of glycogenin, where each GS protomer binds to one glycogenin subunit (via glycogenin C-terminus); the GS tetramer may dissociate from glycogenin dimers to continue glycogen polymerization on its own. May also form a heterooctamer complex with GYG1 (via GYG1 C-terminus). Primed phosphorylation at Ser-657 (site 5) by CSNK2A1 and CSNK2A2 is required for inhibitory phosphorylation at Ser-641 (site 3a), Ser-645 (site 3b), Ser-649 (site 3c) and Ser-653 (site 4) by GSK3A an GSK3B. Dephosphorylation at Ser-641 and Ser-645 by PP1 activates the enzyme. Phosphorylation at Ser-8 is not required for interaction with GYG1. Interaction with GYG1 does not regulate the phosphorylation at Ser-8 and Ser-641. As to expression, specifically expressed in liver (at protein level).

It carries out the reaction [(1-&gt;4)-alpha-D-glucosyl](n) + UDP-alpha-D-glucose = [(1-&gt;4)-alpha-D-glucosyl](n+1) + UDP + H(+). Its pathway is glycan biosynthesis; glycogen biosynthesis. Its activity is regulated as follows. Allosteric activation by glucose-6-phosphate. Phosphorylation reduces the activity towards UDP-glucose. When in the non-phosphorylated state, glycogen synthase does not require glucose-6-phosphate as an allosteric activator; when phosphorylated it does. Glycogen synthase participates in the glycogen biosynthetic process along with glycogenin and glycogen branching enzyme. Extends the primer composed of a few glucose units formed by glycogenin by adding new glucose units to it. In this context, glycogen synthase transfers the glycosyl residue from UDP-Glc to the non-reducing end of alpha-1,4-glucan. This Homo sapiens (Human) protein is Glycogen [starch] synthase, liver.